Here is a 582-residue protein sequence, read N- to C-terminus: tRNA(Ile)-lysidine synthase (582 aa).

46 to 51 contributes to the ATP binding site; that stretch reads SGGADS. The CMP/dCMP-type deaminase domain occupies 402–525; it reads DPLHAAMGEA…DLLADHWGWR (124 aa). Residues 548–582 form a disordered region; it reads VRRRSADTPQTPNAETPAPRSSRSTSASGKPTMLE. The span at 563–575 shows a compositional bias: low complexity; that stretch reads TPAPRSSRSTSAS.

This sequence belongs to the tRNA(Ile)-lysidine synthase family.

It is found in the cytoplasm. It carries out the reaction cytidine(34) in tRNA(Ile2) + L-lysine + ATP = lysidine(34) in tRNA(Ile2) + AMP + diphosphate + H(+). Ligates lysine onto the cytidine present at position 34 of the AUA codon-specific tRNA(Ile) that contains the anticodon CAU, in an ATP-dependent manner. Cytidine is converted to lysidine, thus changing the amino acid specificity of the tRNA from methionine to isoleucine. The protein is tRNA(Ile)-lysidine synthase of Deinococcus radiodurans (strain ATCC 13939 / DSM 20539 / JCM 16871 / CCUG 27074 / LMG 4051 / NBRC 15346 / NCIMB 9279 / VKM B-1422 / R1).